Reading from the N-terminus, the 22-residue chain is Sex pheromone inhibitor determinant (22 aa).

Positions 1-14 (MSKRAMKKIIPLIT) are excised as a propeptide.

The protein localises to the secreted. In terms of biological role, acts as a competitive inhibitor of the CAD1 pheromone. The protein is Sex pheromone inhibitor determinant (iad) of Enterococcus faecalis (strain ATCC 700802 / V583).